The chain runs to 512 residues: Maturase K (512 aa).

This sequence belongs to the intron maturase 2 family. MatK subfamily.

The protein localises to the plastid. Its subcellular location is the chloroplast. In terms of biological role, usually encoded in the trnK tRNA gene intron. Probably assists in splicing its own and other chloroplast group II introns. This is Maturase K from Koelreuteria paniculata (Goldenrain tree).